The primary structure comprises 356 residues: Heat-inducible transcription repressor HrcA (356 aa).

The protein belongs to the HrcA family.

In terms of biological role, negative regulator of class I heat shock genes (grpE-dnaK-dnaJ and groELS operons). Prevents heat-shock induction of these operons. The polypeptide is Heat-inducible transcription repressor HrcA (Chlorobaculum tepidum (strain ATCC 49652 / DSM 12025 / NBRC 103806 / TLS) (Chlorobium tepidum)).